The chain runs to 514 residues: Peptide chain release factor 3 (514 aa).

The 261-residue stretch at K8–H268 folds into the tr-type G domain. GTP contacts are provided by residues S17–T24, D85–H89, and N139–D142.

The protein belongs to the TRAFAC class translation factor GTPase superfamily. Classic translation factor GTPase family. PrfC subfamily.

The protein resides in the cytoplasm. In terms of biological role, increases the formation of ribosomal termination complexes and stimulates activities of RF-1 and RF-2. It binds guanine nucleotides and has strong preference for UGA stop codons. It may interact directly with the ribosome. The stimulation of RF-1 and RF-2 is significantly reduced by GTP and GDP, but not by GMP. This is Peptide chain release factor 3 from Streptococcus pneumoniae (strain 70585).